We begin with the raw amino-acid sequence, 129 residues long: UPF0102 protein Cpar_0015 (129 aa).

This sequence belongs to the UPF0102 family.

The polypeptide is UPF0102 protein Cpar_0015 (Chlorobaculum parvum (strain DSM 263 / NCIMB 8327) (Chlorobium vibrioforme subsp. thiosulfatophilum)).